Here is a 433-residue protein sequence, read N- to C-terminus: Glutamate--tRNA ligase 1 (433 aa).

A 'HIGH' region motif is present at residues 7–17 (PSPTGLIHLGN). The 'KMSKS' region signature appears at 230 to 234 (KMSKR). Lys233 lines the ATP pocket.

The protein belongs to the class-I aminoacyl-tRNA synthetase family. Glutamate--tRNA ligase type 1 subfamily. As to quaternary structure, monomer.

Its subcellular location is the cytoplasm. It carries out the reaction tRNA(Glu) + L-glutamate + ATP = L-glutamyl-tRNA(Glu) + AMP + diphosphate. Functionally, catalyzes the attachment of glutamate to tRNA(Glu) in a two-step reaction: glutamate is first activated by ATP to form Glu-AMP and then transferred to the acceptor end of tRNA(Glu). The chain is Glutamate--tRNA ligase 1 from Neorickettsia sennetsu (strain ATCC VR-367 / Miyayama) (Ehrlichia sennetsu).